The following is a 247-amino-acid chain: DNA repair protein RecO (247 aa).

The protein belongs to the RecO family.

Its function is as follows. Involved in DNA repair and RecF pathway recombination. This Alkalilimnicola ehrlichii (strain ATCC BAA-1101 / DSM 17681 / MLHE-1) protein is DNA repair protein RecO.